Reading from the N-terminus, the 243-residue chain is 35 kDa gas vesicle protein (243 aa).

It belongs to the gas vesicle GvpC family.

It is found in the gas vesicle shell. In terms of biological role, may confer stability to the gas vesicle shells. Gas vesicles are small, hollow, gas filled protein structures that are found in several microbial planktonic microorganisms. They allow the positioning of the organism at the favorable depth for growth. This chain is 35 kDa gas vesicle protein, found in Dactylococcopsis salina (strain PCC 8305) (Myxobactron salinum).